The chain runs to 357 residues: DNA integrity scanning protein DisA (357 aa).

One can recognise a DAC domain in the interval 8 to 146 (VKSMINILQL…GNLRYTLKDI (139 aa)). ATP is bound by residues glycine 75, leucine 93, and 106–110 (MRHRT).

It belongs to the DisA family. In terms of assembly, homooctamer. The cofactor is Mg(2+).

The catalysed reaction is 2 ATP = 3',3'-c-di-AMP + 2 diphosphate. Participates in a DNA-damage check-point that is active prior to asymmetric division when DNA is damaged. DisA forms globular foci that rapidly scan along the chromosomes during sporulation, searching for lesions. When a lesion is present, DisA pauses at the lesion site. This triggers a cellular response that culminates in a temporary block in sporulation initiation. In terms of biological role, also has diadenylate cyclase activity, catalyzing the condensation of 2 ATP molecules into cyclic di-AMP (c-di-AMP). c-di-AMP acts as a signaling molecule that couples DNA integrity with progression of sporulation. The rise in c-di-AMP level generated by DisA while scanning the chromosome, operates as a positive signal that advances sporulation; upon encountering a lesion, the DisA focus arrests at the damaged site and halts c-di-AMP synthesis. This Bacillus cereus (strain ATCC 14579 / DSM 31 / CCUG 7414 / JCM 2152 / NBRC 15305 / NCIMB 9373 / NCTC 2599 / NRRL B-3711) protein is DNA integrity scanning protein DisA.